The chain runs to 689 residues: Glycine--tRNA ligase beta subunit (689 aa).

It belongs to the class-II aminoacyl-tRNA synthetase family. Tetramer of two alpha and two beta subunits.

It is found in the cytoplasm. It catalyses the reaction tRNA(Gly) + glycine + ATP = glycyl-tRNA(Gly) + AMP + diphosphate. This chain is Glycine--tRNA ligase beta subunit, found in Klebsiella pneumoniae subsp. pneumoniae (strain ATCC 700721 / MGH 78578).